A 534-amino-acid polypeptide reads, in one-letter code: MPPKEESSKVTRRSTRSSASVTVENSEPIESHTPTIDDLTFGEESITIDAVLSNFPGRRSQIFDFIRLMGPLDCPTLPIMIYGGASTGKTSVVLQVLRHLNRPFVYSSCRTCYNPRILFESILNQSLLHRKCSLNGYSSAKRCDKPSDFVNLLREALSSVIKTLESTSETSRSDKPDEKPMGKMVYLILDNVDLIRDWDKGTIILQFLFSLYTVLKMPQLGIILISGLPPDVYYSNMGYTDPIPLYFPEYSEEDLRQIFLRNQPNRKLYSAFLDVVLKPFCRVTRRVEELSTTFSLLFRKFCEPLDDLGISPNEDMKRRLYSHLKPLIAHCLNEIFRVSSHPHDGETRGERRQKASYSSENREELEILDFHMSTSAKFLLLSAFLASRNPATLDASMFDSTGGMDNRKRKRKASEKSMEKKEIAEQEAVMKGPGSFPLERLLAIFQCIASVGDSSFGEEDEEEENTTGYDKENNNLMSDILLQVSSLCDANFLIKSGSCPLEGSIRYRSMVSEDLAQKVAKSLSFPLSKYLYRR.

Residues 1 to 36 (MPPKEESSKVTRRSTRSSASVTVENSEPIESHTPTI) form a disordered region. Position 83-90 (83-90 (GGASTGKT)) interacts with ATP. A Nuclear localization signal motif is present at residues 129–136 (HRKCSLNG). The disordered stretch occupies residues 397 to 428 (MFDSTGGMDNRKRKRKASEKSMEKKEIAEQEA). Residues 414 to 424 (SEKSMEKKEIA) are compositionally biased toward basic and acidic residues.

It belongs to the ORC5 family. As to quaternary structure, component of the origin recognition complex (ORC) composed of at least ORC1 (ORC1A or ORC1B), ORC2, ORC3, ORC4, ORC5 and ORC6. ORC is regulated in a cell-cycle and development dependent manner. It is sequentially assembled at the exit from anaphase of mitosis and disassembled as cells enter S phase. Interacts directly with ORC1A, ORC1B, ORC2, ORC3, ORC4 and ORC6. As to expression, follow a cell-cycle regulation with a peak at the G1/S-phase. Mostly expressed in flower buds and cauline leaves, and, to a lower exent, in roots, leaves and stems. Expressed at low levels ubiquitously.

The protein localises to the nucleus. In terms of biological role, component of the origin recognition complex (ORC) that binds origins of replication. DNA-binding is ATP-dependent. The specific DNA sequences that define origins of replication have not been identified yet. ORC is required to assemble the pre-replication complex necessary to initiate DNA replication. The chain is Origin of replication complex subunit 5 from Arabidopsis thaliana (Mouse-ear cress).